Here is a 220-residue protein sequence, read N- to C-terminus: MDSRREVEESSTAPILESKRTRSNGKGKSIDGDHSPPHAATVVTTKATPLQKGGMKKGIAILDFILRLGAIGAALGAAVIMGTNEQILPFFTQFLQFHAQWDDFPMFKFFVVANGAAAGFLILSLPFSIVCIVRPLAAGPRFLLVIVDLVLMALVVAAASSAAAVVYLAHNGSQDANWNAICQQFTDFCQGSSLAVVASFVASVFLACLVVVSSVALKRT.

A disordered region spans residues 1–39 (MDSRREVEESSTAPILESKRTRSNGKGKSIDGDHSPPHA). Topologically, residues 1-60 (MDSRREVEESSTAPILESKRTRSNGKGKSIDGDHSPPHAATVVTTKATPLQKGGMKKGIA) are cytoplasmic. A helical transmembrane segment spans residues 61 to 81 (ILDFILRLGAIGAALGAAVIM). Residues 82–108 (GTNEQILPFFTQFLQFHAQWDDFPMFK) lie on the Extracellular side of the membrane. A helical transmembrane segment spans residues 109–129 (FFVVANGAAAGFLILSLPFSI). Residues 130-141 (VCIVRPLAAGPR) lie on the Cytoplasmic side of the membrane. Residues 142 to 162 (FLLVIVDLVLMALVVAAASSA) form a helical membrane-spanning segment. The Extracellular segment spans residues 163 to 194 (AAVVYLAHNGSQDANWNAICQQFTDFCQGSSL). An N-linked (GlcNAc...) asparagine glycan is attached at N171. The chain crosses the membrane as a helical span at residues 195 to 215 (AVVASFVASVFLACLVVVSSV). Residues 216–220 (ALKRT) lie on the Cytoplasmic side of the membrane.

The protein belongs to the Casparian strip membrane proteins (CASP) family. Homodimer and heterodimers.

The protein localises to the cell membrane. Functionally, regulates membrane-cell wall junctions and localized cell wall deposition. Required for establishment of the Casparian strip membrane domain (CSD) and the subsequent formation of Casparian strips, a cell wall modification of the root endodermis that determines an apoplastic barrier between the intraorganismal apoplasm and the extraorganismal apoplasm and prevents lateral diffusion. This Medicago truncatula (Barrel medic) protein is Casparian strip membrane protein 4.